The primary structure comprises 1102 residues: WASH complex subunit 4 (1102 aa).

Belongs to the SWIP family. As to quaternary structure, component of the WASH complex.

The protein resides in the early endosome. Functionally, acts at least in part as component of the WASH complex which may regulate wash nucleation-promoting factor (NPF) activity and is required for its membrane targeting during endosomal sorting. During embryogenesis, not involved in the wash-dependent developmental migration of hemocytes anteriorly from the tail. The sequence is that of WASH complex subunit 4 from Drosophila melanogaster (Fruit fly).